Here is a 721-residue protein sequence, read N- to C-terminus: Polyribonucleotide nucleotidyltransferase (721 aa).

2 residues coordinate Mg(2+): aspartate 495 and aspartate 501. The KH domain maps to 562-621 (PRLLSFRIDPELIGTVIGPGGRTIKGITERTNTKIDIEDGGIVTIASHDGAAAEEAQKII). The S1 motif domain maps to 631–699 (GEIFPGVVTR…SRGRINLTLR (69 aa)).

The protein belongs to the polyribonucleotide nucleotidyltransferase family. It depends on Mg(2+) as a cofactor.

It is found in the cytoplasm. The catalysed reaction is RNA(n+1) + phosphate = RNA(n) + a ribonucleoside 5'-diphosphate. Functionally, involved in mRNA degradation. Catalyzes the phosphorolysis of single-stranded polyribonucleotides processively in the 3'- to 5'-direction. The protein is Polyribonucleotide nucleotidyltransferase of Prochlorococcus marinus subsp. pastoris (strain CCMP1986 / NIES-2087 / MED4).